Here is a 243-residue protein sequence, read N- to C-terminus: Derlin-1.1 (243 aa).

The Cytoplasmic portion of the chain corresponds to 1–20 (MSSPAEYYKSLPPISKAYGT). The helical transmembrane segment at 21–41 (LCFFTTVLVQLQILHPLFLYL) threads the bilayer. At 42 to 55 (DYPLVFKKFEIWRL) the chain is on the lumenal side. A helical membrane pass occupies residues 56–76 (LTSFFFLAPFSMKFGIRLLMI). Residues 77-94 (ARYGVMLEKGAFDKRTAD) lie on the Cytoplasmic side of the membrane. Residues 95 to 115 (FLWMMIFGAISLLVLSIIPLF) traverse the membrane as a helical segment. The Lumenal portion of the chain corresponds to 116-157 (NSFFLGIPMVSMLLYVWSRENPNAQINIYGLVQLRSFYLPWA). Residues 158 to 178 (MLLLDVIFGSSLMPGLLGIMV) traverse the membrane as a helical segment. Residues 179–243 (GHLYYFFAVL…FRGRSYRLNQ (65 aa)) lie on the Cytoplasmic side of the membrane. The disordered stretch occupies residues 219 to 243 (SPVRPPANGNSGSGVFRGRSYRLNQ).

It belongs to the derlin family. As to expression, expressed in roots, stalks, leaves, immature ears, embryo and endosperm.

It is found in the endoplasmic reticulum membrane. In terms of biological role, may be involved in the degradation process of specific misfolded endoplasmic reticulum (ER) luminal proteins. In Zea mays (Maize), this protein is Derlin-1.1 (DER1.1).